A 331-amino-acid chain; its full sequence is Adenosine deaminase (331 aa).

Positions 12 and 14 each coordinate Zn(2+). Substrate-binding residues include His14, Asp16, and Gly170. Zn(2+) is bound at residue His197. Glu200 (proton donor) is an active-site residue. Residue Asp278 participates in Zn(2+) binding. Asp279 is a substrate binding site.

Belongs to the metallo-dependent hydrolases superfamily. Adenosine and AMP deaminases family. Adenosine deaminase subfamily. Requires Zn(2+) as cofactor.

The catalysed reaction is adenosine + H2O + H(+) = inosine + NH4(+). It carries out the reaction 2'-deoxyadenosine + H2O + H(+) = 2'-deoxyinosine + NH4(+). In terms of biological role, catalyzes the hydrolytic deamination of adenosine and 2-deoxyadenosine. The chain is Adenosine deaminase from Shewanella baltica (strain OS155 / ATCC BAA-1091).